The chain runs to 557 residues: Ribonuclease J 2 (557 aa).

Residues His76, His78, His144, and Glu166 each contribute to the Zn(2+) site. 366-370 is a substrate binding site; it reads HASSH.

This sequence belongs to the metallo-beta-lactamase superfamily. RNA-metabolizing metallo-beta-lactamase-like family. Bacterial RNase J subfamily. Homodimer, may be a subunit of the RNA degradosome. Zn(2+) serves as cofactor.

It is found in the cytoplasm. Its function is as follows. An RNase that has 5'-3' exonuclease and possibly endoonuclease activity. Involved in maturation of rRNA and in some organisms also mRNA maturation and/or decay. The sequence is that of Ribonuclease J 2 from Staphylococcus aureus (strain MRSA252).